Here is a 136-residue protein sequence, read N- to C-terminus: MGARKKISAEKRKEALKTMYFAKLQNVPTSPRKMRLVADMIRGMEVNRALGVLKFSSKEAAARVEKLLRSAIANWEQKNERKAESGELFVTKIFVDGGATLKRMRPAPQGRGYRIRKRSNHVTLFVDSKSNNEDQN.

This sequence belongs to the universal ribosomal protein uL22 family. Part of the 50S ribosomal subunit.

This protein binds specifically to 23S rRNA; its binding is stimulated by other ribosomal proteins, e.g. L4, L17, and L20. It is important during the early stages of 50S assembly. It makes multiple contacts with different domains of the 23S rRNA in the assembled 50S subunit and ribosome. In terms of biological role, the globular domain of the protein is located near the polypeptide exit tunnel on the outside of the subunit, while an extended beta-hairpin is found that lines the wall of the exit tunnel in the center of the 70S ribosome. In Bacteroides fragilis (strain YCH46), this protein is Large ribosomal subunit protein uL22.